Reading from the N-terminus, the 224-residue chain is Response regulator protein GraR (224 aa).

One can recognise a Response regulatory domain in the interval 2–115; it reads QILLVEDDNT…VLIAKLQAIY (114 aa). Aspartate 51 carries the post-translational modification 4-aspartylphosphate. The ompR/PhoB-type DNA-binding region spans 126 to 224; the sequence is KRTLSWQDAT…KVGKGYLAHE (99 aa).

Phosphorylated by GraS.

The protein localises to the cytoplasm. Its function is as follows. Member of the two-component regulatory system GraR/GraS involved in resistance against cationic antimicrobial peptides (CAMPs). This chain is Response regulator protein GraR (graR), found in Staphylococcus epidermidis (strain ATCC 35984 / DSM 28319 / BCRC 17069 / CCUG 31568 / BM 3577 / RP62A).